The primary structure comprises 664 residues: Intraflagellar transport protein 70A2 (664 aa).

TPR repeat units follow at residues 11–44, 45–78, 153–186, 188–220, 395–423, 424–456, and 458–491; these read DGEF…SPRS, RAGL…HPEL, PDGL…SGYQ, DVSY…GIRQ, QVQE…EKYI, PVLM…CNDH, and VWKL…NYDN. Residues 507 to 534 adopt a coiled-coil conformation; sequence YIMTSQNEEAEELMRKIEKEEEQLSYGD. The stretch at 543 to 576 is one TPR 8 repeat; the sequence is CIVNLVIGTLYCAKGNYDFGISRVIKSLEPYHKK.

It belongs to the TTC30/dfy-1/fleer family. In terms of assembly, interacts wit the IFT B complex component IFT52.

It localises to the cell projection. It is found in the cilium. In terms of biological role, required for polyglutamylation of axonemal tubulin. Plays a role in anterograde intraflagellar transport (IFT), the process by which cilia precursors are transported from the base of the cilium to the site of their incorporation at the tip. This Rattus norvegicus (Rat) protein is Intraflagellar transport protein 70A2 (Ift70a2).